Here is a 334-residue protein sequence, read N- to C-terminus: Mevalonate kinase (334 aa).

110–120 contributes to the ATP binding site; the sequence is PVGAGLGSSAA. Aspartate 161 (proton acceptor) is an active-site residue.

The protein belongs to the GHMP kinase family. Mevalonate kinase subfamily. In terms of assembly, homodimer. The cofactor is Mg(2+).

The protein localises to the cytoplasm. The catalysed reaction is (R)-mevalonate + ATP = (R)-5-phosphomevalonate + ADP + H(+). The protein operates within isoprenoid biosynthesis; isopentenyl diphosphate biosynthesis via mevalonate pathway; isopentenyl diphosphate from (R)-mevalonate: step 1/3. Functionally, catalyzes the phosphorylation of (R)-mevalonate (MVA) to (R)-mevalonate 5-phosphate (MVAP). Functions in the mevalonate (MVA) pathway leading to isopentenyl diphosphate (IPP), a key precursor for the biosynthesis of isoprenoid compounds such as archaeal membrane lipids. This is Mevalonate kinase from Thermococcus onnurineus (strain NA1).